The chain runs to 1530 residues: Regulating synaptic membrane exocytosis protein 2 (1530 aa).

Residues Met1–Glu34 are disordered. Pro residues predominate over residues Arg10–Glu25. The RabBD domain occupies Met26–Ser194. An FYVE-type zinc finger spans residues Lys126–Glu182. Zn(2+) contacts are provided by Cys132, Cys135, Cys148, Cys151, Cys156, Cys159, Cys174, and Cys177. 2 disordered regions span residues Gly195–Lys608 and Ser632–Thr655. Composition is skewed to basic and acidic residues over residues Leu210–Glu225, Glu327–Arg338, Arg357–Ser375, Glu391–Asp410, and Glu419–Ala443. Ser409 is modified (phosphoserine). Residues Ala458–Ser472 are compositionally biased toward polar residues. Basic and acidic residues predominate over residues Asp484–Asp501. Over residues Arg519–Ser530 the composition is skewed to polar residues. A compositionally biased stretch (basic residues) spans Arg537–Lys546. Over residues Ser567–Ser577 the composition is skewed to acidic residues. 2 stretches are compositionally biased toward basic and acidic residues: residues Val578–Ser592 and Asn643–Pro653. The 87-residue stretch at Asp677–Arg763 folds into the PDZ domain. At Thr698 the chain carries Phosphothreonine. Residues Ile771–Met802 form a disordered region. Phosphoserine occurs at positions 800 and 803. Positions Leu814–Tyr937 constitute a C2 1 domain. Disordered stretches follow at residues Pro948–Ser982, Leu1003–Ala1122, Arg1130–Gln1149, Lys1154–Ser1187, Ser1242–Lys1263, and Lys1282–Thr1307. The span at Leu1003–Gly1024 shows a compositional bias: polar residues. Basic and acidic residues predominate over residues Arg1067–His1086. Positions Arg1088 to Gly1101 are enriched in polar residues. The residue at position 1095 (Ser1095) is a Phosphoserine. The segment covering Lys1154–Ala1165 has biased composition (basic and acidic residues). Phosphoserine is present on Ser1175. The segment covering Ser1178–Ser1187 has biased composition (low complexity). Position 1251 is a phosphoserine (Ser1251). In terms of domain architecture, C2 2 spans Ala1376–Phe1494. Residues Ser1515 and Ser1518 each carry the phosphoserine modification.

Interacts with TSPOAP1 and RIMBP2. Interacts with PPFIA3 and PPFIA4. Interacts via its zinc finger with the first C2 domain of UNC13A. Forms a complex consisting of UNC13A, RIMS2 and RAB3A. Heterodimer with PCLO. Part of a ternary complex involving PCLO and EPAC2. Interacts with RAB3A and RAB3B that have been activated by GTP-binding. Interacts with RAB3C, RAB3D and RAB26. As to expression, detected in testis, pituitary and an insulinoma cell line. Detected at low levels in cerebellar cortex.

The protein localises to the synapse. It localises to the synaptosome. Rab effector involved in exocytosis. May act as scaffold protein. Plays a role in dendrite formation by melanocytes. The sequence is that of Regulating synaptic membrane exocytosis protein 2 (Rims2) from Mus musculus (Mouse).